Here is a 449-residue protein sequence, read N- to C-terminus: Argininosuccinate synthase (449 aa).

ATP contacts are provided by residues Ala-17–Ser-25 and Ala-43. L-citrulline is bound at residue Tyr-99. Positions 129 and 131 each coordinate ATP. 3 residues coordinate L-aspartate: Thr-131, Asn-135, and Asp-136. Residue Asn-135 participates in L-citrulline binding. Asp-136 is a binding site for ATP. L-citrulline is bound by residues Arg-139 and Ser-192. Asp-194 lines the ATP pocket. L-citrulline-binding residues include Thr-201, Glu-203, and Glu-280.

The protein belongs to the argininosuccinate synthase family. Type 2 subfamily. In terms of assembly, homotetramer.

The protein resides in the cytoplasm. It carries out the reaction L-citrulline + L-aspartate + ATP = 2-(N(omega)-L-arginino)succinate + AMP + diphosphate + H(+). It functions in the pathway amino-acid biosynthesis; L-arginine biosynthesis; L-arginine from L-ornithine and carbamoyl phosphate: step 2/3. The polypeptide is Argininosuccinate synthase (Dickeya dadantii (strain 3937) (Erwinia chrysanthemi (strain 3937))).